Here is a 347-residue protein sequence, read N- to C-terminus: Uroporphyrinogen decarboxylase (347 aa).

Substrate-binding positions include 36 to 40, Asp86, Tyr160, Ser212, and His326; that span reads RQAGR.

The protein belongs to the uroporphyrinogen decarboxylase family. In terms of assembly, homodimer.

Its subcellular location is the cytoplasm. The enzyme catalyses uroporphyrinogen III + 4 H(+) = coproporphyrinogen III + 4 CO2. It functions in the pathway porphyrin-containing compound metabolism; protoporphyrin-IX biosynthesis; coproporphyrinogen-III from 5-aminolevulinate: step 4/4. Catalyzes the decarboxylation of four acetate groups of uroporphyrinogen-III to yield coproporphyrinogen-III. The sequence is that of Uroporphyrinogen decarboxylase from Wolbachia sp. subsp. Brugia malayi (strain TRS).